A 150-amino-acid polypeptide reads, in one-letter code: Small ribosomal subunit protein uS11y (150 aa).

The disordered stretch occupies residues 129–150 (EDVTPVPTDSTRRKGGRRGRRL). The span at 141–150 (RKGGRRGRRL) shows a compositional bias: basic residues.

The protein belongs to the universal ribosomal protein uS11 family.

The polypeptide is Small ribosomal subunit protein uS11y (Zea mays (Maize)).